Consider the following 272-residue polypeptide: Dermonecrotic toxin LvSicTox-alphaIC1bv (272 aa).

Residue His5 is part of the active site. The Mg(2+) site is built by Glu25 and Asp27. His41 (nucleophile) is an active-site residue. 2 disulfide bridges follow: Cys45–Cys51 and Cys47–Cys189. Asp84 contributes to the Mg(2+) binding site.

Belongs to the arthropod phospholipase D family. Class II subfamily. The cofactor is Mg(2+). Expressed by the venom gland.

It is found in the secreted. The enzyme catalyses an N-(acyl)-sphingosylphosphocholine = an N-(acyl)-sphingosyl-1,3-cyclic phosphate + choline. It carries out the reaction an N-(acyl)-sphingosylphosphoethanolamine = an N-(acyl)-sphingosyl-1,3-cyclic phosphate + ethanolamine. It catalyses the reaction a 1-acyl-sn-glycero-3-phosphocholine = a 1-acyl-sn-glycero-2,3-cyclic phosphate + choline. The catalysed reaction is a 1-acyl-sn-glycero-3-phosphoethanolamine = a 1-acyl-sn-glycero-2,3-cyclic phosphate + ethanolamine. Its function is as follows. Dermonecrotic toxins cleave the phosphodiester linkage between the phosphate and headgroup of certain phospholipids (sphingolipid and lysolipid substrates), forming an alcohol (often choline) and a cyclic phosphate. This toxin acts on sphingomyelin (SM). It may also act on ceramide phosphoethanolamine (CPE), lysophosphatidylcholine (LPC) and lysophosphatidylethanolamine (LPE), but not on lysophosphatidylserine (LPS), and lysophosphatidylglycerol (LPG). It acts by transphosphatidylation, releasing exclusively cyclic phosphate products as second products. Induces dermonecrosis, hemolysis, increased vascular permeability, edema, inflammatory response, and platelet aggregation. The chain is Dermonecrotic toxin LvSicTox-alphaIC1bv from Loxosceles variegata (Recluse spider).